The chain runs to 185 residues: Ribosome-recycling factor (185 aa).

It belongs to the RRF family.

It is found in the cytoplasm. Responsible for the release of ribosomes from messenger RNA at the termination of protein biosynthesis. May increase the efficiency of translation by recycling ribosomes from one round of translation to another. Functionally, plays a role in sporulation. This Bacillus subtilis (strain 168) protein is Ribosome-recycling factor.